The following is a 230-amino-acid chain: Large ribosomal subunit protein uL4 (230 aa).

Positions 51–105 are disordered; sequence RAAARQGTHSTKTRGDVSGGGRKPYRQKGTGRARQGSMRAPQFTGGGIVHGPKLR.

Belongs to the universal ribosomal protein uL4 family. As to quaternary structure, part of the 50S ribosomal subunit.

Functionally, one of the primary rRNA binding proteins, this protein initially binds near the 5'-end of the 23S rRNA. It is important during the early stages of 50S assembly. It makes multiple contacts with different domains of the 23S rRNA in the assembled 50S subunit and ribosome. Forms part of the polypeptide exit tunnel. The chain is Large ribosomal subunit protein uL4 from Mycobacterium leprae (strain Br4923).